The sequence spans 338 residues: Phosphoribosylformylglycinamidine cyclo-ligase (338 aa).

This sequence belongs to the AIR synthase family.

Its subcellular location is the cytoplasm. The enzyme catalyses 2-formamido-N(1)-(5-O-phospho-beta-D-ribosyl)acetamidine + ATP = 5-amino-1-(5-phospho-beta-D-ribosyl)imidazole + ADP + phosphate + H(+). The protein operates within purine metabolism; IMP biosynthesis via de novo pathway; 5-amino-1-(5-phospho-D-ribosyl)imidazole from N(2)-formyl-N(1)-(5-phospho-D-ribosyl)glycinamide: step 2/2. This is Phosphoribosylformylglycinamidine cyclo-ligase from Thermoplasma volcanium (strain ATCC 51530 / DSM 4299 / JCM 9571 / NBRC 15438 / GSS1).